We begin with the raw amino-acid sequence, 267 residues long: 5'-nucleotidase SurE (267 aa).

4 residues coordinate a divalent metal cation: D9, D10, S40, and N97.

The protein belongs to the SurE nucleotidase family. It depends on a divalent metal cation as a cofactor.

The protein localises to the cytoplasm. The catalysed reaction is a ribonucleoside 5'-phosphate + H2O = a ribonucleoside + phosphate. In terms of biological role, nucleotidase that shows phosphatase activity on nucleoside 5'-monophosphates. The sequence is that of 5'-nucleotidase SurE from Helicobacter pylori (strain G27).